Reading from the N-terminus, the 457-residue chain is Proline-specific permease ProY (457 aa).

The Cytoplasmic portion of the chain corresponds to 1–17 (MESKNKLKRGLSTRHIR). The next 2 membrane-spanning stretches (helical) occupy residues 18–38 (FMALGSAIGTGLFYGSADAIK) and 39–59 (MAGPSVLLAYIIGGIAAYIIM). At 60–84 (RALGEMSVHNPAASSFSRYAQENLG) the chain is on the cytoplasmic side. The chain crosses the membrane as a helical span at residues 85–105 (PLAGYITGWTYCFEILIVAIA). The Periplasmic portion of the chain corresponds to 106 to 113 (DVTAFGIY). The helical transmembrane segment at 114–134 (MGVWFPTVPHWIWVLSVVLII) threads the bilayer. Residues 135 to 156 (CAVNLMSVKVFGELEFWFSFFK) are Cytoplasmic-facing. The helical transmembrane segment at 157–177 (VATIIIMIVAGFGIIIWGIGN) threads the bilayer. Over 178–197 (GGQPTGIHNLWSNGGFFSNG) the chain is Periplasmic. Residues 198–218 (WLGMVMSLQMVMFAYGGIEII) form a helical membrane-spanning segment. Over 219–242 (GITAGEAKDPEKSIPRAINSVPMR) the chain is Cytoplasmic. The helical transmembrane segment at 243 to 263 (ILVFYVGTLFVIMSIYPWNQV) threads the bilayer. At 264–277 (GTAGSPFVLTFQHM) the chain is on the periplasmic side. Residues 278–298 (GITFAASILNFVVLTASLSAI) form a helical membrane-spanning segment. Residues 299–331 (NSDVFGVGRMLHGMAEQGSAPKIFSKTSRRGIP) lie on the Cytoplasmic side of the membrane. A helical membrane pass occupies residues 332-352 (WVTVLVMTTALLFAVYLNYIM). Topologically, residues 353 to 355 (PEN) are periplasmic. Residues 356–376 (VFLVIASLATFATVWVWIMIL) traverse the membrane as a helical segment. The Cytoplasmic portion of the chain corresponds to 377 to 399 (LSQIAFRRRLPPEEVKALKFKVP). The chain crosses the membrane as a helical span at residues 400–420 (GGVATTIGGLIFLLFIIGLIG). Residues 421 to 424 (YHPD) lie on the Periplasmic side of the membrane. A helical membrane pass occupies residues 425 to 445 (TRISLYVGFAWIVVLLIGWMF). The Cytoplasmic portion of the chain corresponds to 446–457 (KRRHDRQLAENQ).

It belongs to the amino acid-polyamine-organocation (APC) superfamily. Amino acid transporter (AAT) (TC 2.A.3.1) family.

The protein localises to the cell inner membrane. Its function is as follows. Permease that is involved in the transport across the cytoplasmic membrane of proline. The chain is Proline-specific permease ProY (proY) from Escherichia coli O157:H7.